The chain runs to 526 residues: ATP synthase subunit alpha (526 aa).

An ATP-binding site is contributed by 178-185 (GDRQTGKT).

This sequence belongs to the ATPase alpha/beta chains family. In terms of assembly, F-type ATPases have 2 components, CF(1) - the catalytic core - and CF(0) - the membrane proton channel. CF(1) has five subunits: alpha(3), beta(3), gamma(1), delta(1), epsilon(1). CF(0) has four main subunits: a(1), b(1), b'(1) and c(9-12).

It is found in the cell membrane. The catalysed reaction is ATP + H2O + 4 H(+)(in) = ADP + phosphate + 5 H(+)(out). Produces ATP from ADP in the presence of a proton gradient across the membrane. The alpha chain is a regulatory subunit. This Roseiflexus castenholzii (strain DSM 13941 / HLO8) protein is ATP synthase subunit alpha.